Consider the following 232-residue polypeptide: Probable intron-encoded endonuclease aI3 (232 aa).

The protein belongs to the LAGLIDADG endonuclease family.

Its subcellular location is the mitochondrion. In terms of biological role, mitochondrial DNA endonuclease involved in intron homing. This Dictyostelium discoideum (Social amoeba) protein is Probable intron-encoded endonuclease aI3 (aI3).